The following is a 68-amino-acid chain: Protein SlyX homolog (68 aa).

The protein belongs to the SlyX family.

The polypeptide is Protein SlyX homolog (Pseudomonas syringae pv. tomato (strain ATCC BAA-871 / DC3000)).